The primary structure comprises 758 residues: Calpain (758 aa).

The Calpain catalytic domain occupies 99-397; it reads LWEDPDFPAN…FSRVEVCHLG (299 aa). Active-site residues include C154, H313, and N337. The tract at residues 398 to 562 is domain III; it reads LESLEYNQNF…TSITEQELDE (165 aa). The linker stretch occupies residues 563–582; it reads DNTNQGLPDDVIEALKLEDT. The segment at 583–757 is domain IV; the sequence is LLDEDQEIEQ…AEDYLRFSVY (175 aa). Ca(2+) contacts are provided by D641, N643, T645, H647, E652, D671, D673, S675, Y677, and E682. 2 consecutive EF-hand domains span residues 658–693 and 694–729; these read IQAKGWKHIFIKHDVDQSGYFSAYEFREALNDAGYH and VSNRLINAIINRYQDPGTDKISFEDFMLCMVRLKTA.

It belongs to the peptidase C2 family.

With respect to regulation, activated by free cytoplasmic calcium. In terms of biological role, calpains are calcium-activated non-lysosomal thiol-proteases. The protein is Calpain of Schistosoma mansoni (Blood fluke).